The chain runs to 393 residues: Pyrimidine monooxygenase RutA (393 aa).

Residues 79-80 (IK), asparagine 145, glutamate 154, 170-171 (RY), and serine 220 each bind FMN.

The protein belongs to the NtaA/SnaA/DszA monooxygenase family. RutA subfamily.

It carries out the reaction uracil + FMNH2 + NADH + O2 = (Z)-3-ureidoacrylate + FMN + NAD(+) + H2O + H(+). The catalysed reaction is thymine + FMNH2 + NADH + O2 = (Z)-2-methylureidoacrylate + FMN + NAD(+) + H2O + H(+). In terms of biological role, catalyzes the pyrimidine ring opening between N-3 and C-4 by an unusual flavin hydroperoxide-catalyzed mechanism, adding oxygen atoms in the process to yield ureidoacrylate peracid, that immediately reacts with FMN forming ureidoacrylate and FMN-N(5)-oxide. The FMN-N(5)-oxide reacts spontaneously with NADH to produce FMN. Requires the flavin reductase RutF to regenerate FMN in vivo. The chain is Pyrimidine monooxygenase RutA from Escherichia coli O6:H1 (strain CFT073 / ATCC 700928 / UPEC).